The sequence spans 52 residues: Insulin-2 (52 aa).

3 disulfide bridges follow: cysteine 7–cysteine 38, cysteine 19–cysteine 51, and cysteine 37–cysteine 42.

It belongs to the insulin family. In terms of assembly, heterodimer of a B chain and an A chain linked by two disulfide bonds.

It localises to the secreted. Its function is as follows. Insulin decreases blood glucose concentration. It increases cell permeability to monosaccharides, amino acids and fatty acids. It accelerates glycolysis, the pentose phosphate cycle, and glycogen synthesis in liver. In Huso dauricus (Kaluga sturgeon), this protein is Insulin-2.